Reading from the N-terminus, the 710-residue chain is Polyribonucleotide nucleotidyltransferase (710 aa).

Residues Asp-487 and Asp-493 each coordinate Mg(2+). The 60-residue stretch at 554 to 613 (PKIITMTINPDKIRDVIGPSGKQINKIIEETGVKIDIEQDGTVFISSIDQQMNEKAKKII) folds into the KH domain. One can recognise an S1 motif domain in the interval 623–691 (GEIYLGKVKR…KQGRVNLSRK (69 aa)).

Belongs to the polyribonucleotide nucleotidyltransferase family. The cofactor is Mg(2+).

The protein resides in the cytoplasm. The catalysed reaction is RNA(n+1) + phosphate = RNA(n) + a ribonucleoside 5'-diphosphate. Functionally, involved in mRNA degradation. Catalyzes the phosphorolysis of single-stranded polyribonucleotides processively in the 3'- to 5'-direction. The protein is Polyribonucleotide nucleotidyltransferase of Bacillus cytotoxicus (strain DSM 22905 / CIP 110041 / 391-98 / NVH 391-98).